The chain runs to 277 residues: MEMO1 family protein TRQ2_0860 (277 aa).

Belongs to the MEMO1 family.

In Thermotoga sp. (strain RQ2), this protein is MEMO1 family protein TRQ2_0860.